The chain runs to 338 residues: Cell division protein ZipA (338 aa).

The Periplasmic portion of the chain corresponds to 1–2 (MS). The chain crosses the membrane as a helical span at residues 3-23 (LREWLIAIGTLVIIGIVIDGV). Topologically, residues 24–338 (RRMRRARKES…FERKQRSQRA (315 aa)) are cytoplasmic. Positions 33-192 (SMAISSGMGA…RKNQPLAGAN (160 aa)) are disordered. Basic and acidic residues-rich tracts occupy residues 70-81 (TLEDRGYLKRDM) and 138-162 (EVDR…RAEE).

This sequence belongs to the ZipA family. In terms of assembly, interacts with FtsZ via their C-terminal domains.

It localises to the cell inner membrane. Its function is as follows. Essential cell division protein that stabilizes the FtsZ protofilaments by cross-linking them and that serves as a cytoplasmic membrane anchor for the Z ring. Also required for the recruitment to the septal ring of downstream cell division proteins. This Marinobacter nauticus (strain ATCC 700491 / DSM 11845 / VT8) (Marinobacter aquaeolei) protein is Cell division protein ZipA.